The primary structure comprises 132 residues: Fatty acid-binding protein 9 (132 aa).

Residues Ser13, Ser14, Ser40, Ser42, Ser44, and Ser91 each carry the phosphoserine modification.

It belongs to the calycin superfamily. Fatty-acid binding protein (FABP) family. As to expression, testis.

The protein localises to the cytoplasm. This is Fatty acid-binding protein 9 (Fabp9) from Mus musculus (Mouse).